A 205-amino-acid polypeptide reads, in one-letter code: Large ribosomal subunit protein uL4 (205 aa).

Positions 56–76 (VSGTTAKPYRQKHTGRARQGS) are disordered.

Belongs to the universal ribosomal protein uL4 family. As to quaternary structure, part of the 50S ribosomal subunit.

One of the primary rRNA binding proteins, this protein initially binds near the 5'-end of the 23S rRNA. It is important during the early stages of 50S assembly. It makes multiple contacts with different domains of the 23S rRNA in the assembled 50S subunit and ribosome. In terms of biological role, forms part of the polypeptide exit tunnel. This is Large ribosomal subunit protein uL4 from Ehrlichia ruminantium (strain Welgevonden).